The primary structure comprises 99 residues: Aspartyl/glutamyl-tRNA(Asn/Gln) amidotransferase subunit C (99 aa).

It belongs to the GatC family. As to quaternary structure, heterotrimer of A, B and C subunits.

It catalyses the reaction L-glutamyl-tRNA(Gln) + L-glutamine + ATP + H2O = L-glutaminyl-tRNA(Gln) + L-glutamate + ADP + phosphate + H(+). The enzyme catalyses L-aspartyl-tRNA(Asn) + L-glutamine + ATP + H2O = L-asparaginyl-tRNA(Asn) + L-glutamate + ADP + phosphate + 2 H(+). Allows the formation of correctly charged Asn-tRNA(Asn) or Gln-tRNA(Gln) through the transamidation of misacylated Asp-tRNA(Asn) or Glu-tRNA(Gln) in organisms which lack either or both of asparaginyl-tRNA or glutaminyl-tRNA synthetases. The reaction takes place in the presence of glutamine and ATP through an activated phospho-Asp-tRNA(Asn) or phospho-Glu-tRNA(Gln). This chain is Aspartyl/glutamyl-tRNA(Asn/Gln) amidotransferase subunit C, found in Cupriavidus metallidurans (strain ATCC 43123 / DSM 2839 / NBRC 102507 / CH34) (Ralstonia metallidurans).